The following is a 248-amino-acid chain: NAD kinase (248 aa).

The active-site Proton acceptor is the aspartate 45. NAD(+) contacts are provided by residues 45 to 46 (DG), arginine 50, 110 to 111 (NE), and aspartate 138.

Belongs to the NAD kinase family. A divalent metal cation serves as cofactor.

The protein localises to the cytoplasm. It catalyses the reaction NAD(+) + ATP = ADP + NADP(+) + H(+). In terms of biological role, involved in the regulation of the intracellular balance of NAD and NADP, and is a key enzyme in the biosynthesis of NADP. Catalyzes specifically the phosphorylation on 2'-hydroxyl of the adenosine moiety of NAD to yield NADP. The sequence is that of NAD kinase from Sulfurisphaera tokodaii (strain DSM 16993 / JCM 10545 / NBRC 100140 / 7) (Sulfolobus tokodaii).